We begin with the raw amino-acid sequence, 190 residues long: Homeobox protein SEBOX (190 aa).

Residues 1–11 (MPSPVDASSAD) are compositionally biased toward low complexity. 2 disordered regions span residues 1–24 (MPSP…RKRT) and 82–161 (ILSP…VHPS). A DNA-binding region (homeobox) is located at residues 19-78 (HRRKRTTFSKGQLLELERAFAAWPYPNISTHEHLAWVTCLPEAKVQVWFQKRWAKIIKNR). Positions 89–100 (CPQSSCSLPDTL) are enriched in polar residues.

The protein belongs to the paired homeobox family.

Its subcellular location is the nucleus. Its function is as follows. Probable transcription factor involved in the control of specification of mesoderm and endoderm. The protein is Homeobox protein SEBOX (SEBOX) of Homo sapiens (Human).